Consider the following 97-residue polypeptide: MSSAPEPPTFKKEPPKEKEFQSPGLRGVRTTTLFRAVNPELFIKPNKPVMAFGLVTLSLCVAYIGYLHAIQENKKDLYEAIDSEGHSYMRRKTSKWD.

Residues Met1–Gly24 form a disordered region. Residues Thr9 to Phe20 are compositionally biased toward basic and acidic residues. The helical transmembrane segment at Pro48 to Ile70 threads the bilayer.

It belongs to the SMIM8 family.

The protein localises to the membrane. In Homo sapiens (Human), this protein is Small integral membrane protein 8 (SMIM8).